Consider the following 431-residue polypeptide: Glutamyl-tRNA reductase (431 aa).

Substrate contacts are provided by residues 49 to 52 (TCNR), Ser-109, 114 to 116 (EGQ), and Gln-120. Cys-50 functions as the Nucleophile in the catalytic mechanism. An NADP(+)-binding site is contributed by 189–194 (GAGKMS).

It belongs to the glutamyl-tRNA reductase family. In terms of assembly, homodimer.

It catalyses the reaction (S)-4-amino-5-oxopentanoate + tRNA(Glu) + NADP(+) = L-glutamyl-tRNA(Glu) + NADPH + H(+). It participates in porphyrin-containing compound metabolism; protoporphyrin-IX biosynthesis; 5-aminolevulinate from L-glutamyl-tRNA(Glu): step 1/2. The protein operates within porphyrin-containing compound metabolism; chlorophyll biosynthesis. Its function is as follows. Catalyzes the NADPH-dependent reduction of glutamyl-tRNA(Glu) to glutamate 1-semialdehyde (GSA). The sequence is that of Glutamyl-tRNA reductase from Trichodesmium erythraeum (strain IMS101).